A 98-amino-acid chain; its full sequence is Large ribosomal subunit protein uL23 (98 aa).

The protein belongs to the universal ribosomal protein uL23 family. Part of the 50S ribosomal subunit. Contacts protein L29, and trigger factor when it is bound to the ribosome.

Functionally, one of the early assembly proteins it binds 23S rRNA. One of the proteins that surrounds the polypeptide exit tunnel on the outside of the ribosome. Forms the main docking site for trigger factor binding to the ribosome. The polypeptide is Large ribosomal subunit protein uL23 (Methylobacterium radiotolerans (strain ATCC 27329 / DSM 1819 / JCM 2831 / NBRC 15690 / NCIMB 10815 / 0-1)).